The chain runs to 299 residues: UDP-N-acetylenolpyruvoylglucosamine reductase (299 aa).

An FAD-binding PCMH-type domain is found at 21-189 (RVGGPAQWLL…LSARFRLEPG (169 aa)). Residue Arg-168 is part of the active site. Ser-219 serves as the catalytic Proton donor. Glu-289 is a catalytic residue.

This sequence belongs to the MurB family. Requires FAD as cofactor.

It is found in the cytoplasm. It catalyses the reaction UDP-N-acetyl-alpha-D-muramate + NADP(+) = UDP-N-acetyl-3-O-(1-carboxyvinyl)-alpha-D-glucosamine + NADPH + H(+). Its pathway is cell wall biogenesis; peptidoglycan biosynthesis. In terms of biological role, cell wall formation. The protein is UDP-N-acetylenolpyruvoylglucosamine reductase of Parasynechococcus marenigrum (strain WH8102).